The following is a 975-amino-acid chain: Glycine dehydrogenase (decarboxylating) (975 aa).

The residue at position 723 (Lys-723) is an N6-(pyridoxal phosphate)lysine.

The protein belongs to the GcvP family. In terms of assembly, the glycine cleavage system is composed of four proteins: P, T, L and H. Requires pyridoxal 5'-phosphate as cofactor.

It carries out the reaction N(6)-[(R)-lipoyl]-L-lysyl-[glycine-cleavage complex H protein] + glycine + H(+) = N(6)-[(R)-S(8)-aminomethyldihydrolipoyl]-L-lysyl-[glycine-cleavage complex H protein] + CO2. In terms of biological role, the glycine cleavage system catalyzes the degradation of glycine. The P protein binds the alpha-amino group of glycine through its pyridoxal phosphate cofactor; CO(2) is released and the remaining methylamine moiety is then transferred to the lipoamide cofactor of the H protein. The protein is Glycine dehydrogenase (decarboxylating) of Burkholderia mallei (strain NCTC 10247).